A 1249-amino-acid chain; its full sequence is Pleckstrin homology-like domain family B member 2 (1249 aa).

Disordered stretches follow at residues 64–85 (QPVS…SPSL) and 128–154 (DHYT…SSRN). Residues Ser-71 and Ser-73 each carry the phosphoserine modification. The segment covering 74 to 84 (PMGTSVRSSPS) has biased composition (polar residues). Basic and acidic residues predominate over residues 128–143 (DHYTGRDSERSTRLSE). Ser-156, Ser-203, Ser-241, and Ser-244 each carry phosphoserine. Disordered stretches follow at residues 190-248 (SPIS…LSNM) and 264-289 (NQMS…GEKD). The segment covering 231–248 (ENVSVRTRKYSGSSLSNM) has biased composition (polar residues). Residues 267 to 283 (SPLSLPPRSSLGNSRRG) are compositionally biased toward low complexity. Phosphoserine is present on residues Ser-329, Ser-333, Ser-347, Ser-380, Ser-383, Ser-389, Ser-411, Ser-416, Ser-465, Ser-486, and Ser-510. A disordered region spans residues 388–424 (DSDLESLRQSSETPQPVLRERKSSISSISGRDDLMDY). Phosphothreonine occurs at positions 546 and 570. Coiled-coil stretches lie at residues 580-692 (TQEL…LDNC) and 718-803 (FEDL…LCNL). The tract at residues 866 to 934 (VSQPQSSEHF…LGQSNSCGSV (69 aa)) is disordered. Residues 873 to 888 (EHFRSLEERKKQHKEG) show a composition bias toward basic and acidic residues. Position 894 is a phosphothreonine (Thr-894). Polar residues predominate over residues 901–919 (TPSLSPHFSSATMGRSTTP). Residues 1028–1094 (IARIEEMERL…QKLIEKEVKI (67 aa)) adopt a coiled-coil conformation. Positions 1139–1242 (EKTCRGYLIK…WMDVIVTGAE (104 aa)) constitute a PH domain.

As to quaternary structure, interacts with FLNC. Interacts with AMOTL2; interaction may facilitate PHLDB2 localization to the myotube podosome cortex that surrounds the core. Part of a cortical microtubule stabilization complex (CMSC) composed of KANK1, PPFIA1, PPFIBP1, ERC1/ELKS, PHLDB2/LL5beta, CLASPs, KIF21A and possibly additional interactors; within CMSCs KANK1 and PHLDB2/LL5beta appear to be the core components for targeting of microtubule-binding proteins KIF21A and CLASPs, whereas PPFIA1, PPFIBP1 and ERC1/ELKS serve as scaffolds for protein clustering. As to expression, expressed at postsynaptic membranes of skeletal neuromuscular junctions (at protein level).

The protein resides in the cytoplasm. Its subcellular location is the membrane. It is found in the cell projection. It localises to the podosome. The protein localises to the cell cortex. Functionally, seems to be involved in the assembly of the postsynaptic apparatus. May play a role in acetyl-choline receptor (AChR) aggregation in the postsynaptic membrane. The protein is Pleckstrin homology-like domain family B member 2 (Phldb2) of Mus musculus (Mouse).